Consider the following 321-residue polypeptide: Glyoxylate/hydroxypyruvate reductase B (321 aa).

Residues Arg237 and Glu266 contribute to the active site. The active-site Proton donor is His285.

Belongs to the D-isomer specific 2-hydroxyacid dehydrogenase family. GhrB subfamily. Homodimer.

It is found in the cytoplasm. It carries out the reaction glycolate + NADP(+) = glyoxylate + NADPH + H(+). The catalysed reaction is (R)-glycerate + NAD(+) = 3-hydroxypyruvate + NADH + H(+). It catalyses the reaction (R)-glycerate + NADP(+) = 3-hydroxypyruvate + NADPH + H(+). In terms of biological role, catalyzes the NADPH-dependent reduction of glyoxylate and hydroxypyruvate into glycolate and glycerate, respectively. This is Glyoxylate/hydroxypyruvate reductase B from Erwinia tasmaniensis (strain DSM 17950 / CFBP 7177 / CIP 109463 / NCPPB 4357 / Et1/99).